The primary structure comprises 302 residues: Ornithine carbamoyltransferase (302 aa).

Carbamoyl phosphate-binding positions include 52–55 (STRT), glutamine 79, arginine 103, and 130–133 (HPCQ). L-ornithine is bound by residues asparagine 161, aspartate 221, and 225 to 226 (SM). Residues 261 to 262 (CL) and arginine 289 each bind carbamoyl phosphate.

This sequence belongs to the aspartate/ornithine carbamoyltransferase superfamily. OTCase family.

Its subcellular location is the cytoplasm. The catalysed reaction is carbamoyl phosphate + L-ornithine = L-citrulline + phosphate + H(+). It participates in amino-acid biosynthesis; L-arginine biosynthesis; L-arginine from L-ornithine and carbamoyl phosphate: step 1/3. Functionally, reversibly catalyzes the transfer of the carbamoyl group from carbamoyl phosphate (CP) to the N(epsilon) atom of ornithine (ORN) to produce L-citrulline. This is Ornithine carbamoyltransferase from Methanospirillum hungatei JF-1 (strain ATCC 27890 / DSM 864 / NBRC 100397 / JF-1).